Reading from the N-terminus, the 359-residue chain is Probable isoaspartyl peptidase/L-asparaginase 3 (359 aa).

The Nucleophile role is filled by T224. Residues 252 to 255 (RVGD) and 275 to 278 (TGDG) each bind substrate.

Belongs to the Ntn-hydrolase family. Heterotetramer of two alpha and two beta chains arranged as a dimer of alpha/beta heterodimers. In terms of processing, cleaved into an alpha and beta chain by autocatalysis; this activates the enzyme. The N-terminal residue of the beta subunit is responsible for the nucleophile hydrolase activity.

The catalysed reaction is Cleavage of a beta-linked Asp residue from the N-terminus of a polypeptide.. In terms of biological role, acts in asparagine catabolism but also in the final steps of protein degradation via hydrolysis of a range of isoaspartyl dipeptides. This is Probable isoaspartyl peptidase/L-asparaginase 3 from Arabidopsis thaliana (Mouse-ear cress).